Consider the following 66-residue polypeptide: Ornithorhynchus venom defensin-like peptide A (66 aa).

The signal sequence occupies residues 1-22; it reads MRLTYLLLLLVAVLFQAGSGSA. The propeptide occupies 23 to 24; that stretch reads EP. 3 disulfide bridges follow: Cys-33-Cys-63, Cys-40-Cys-56, and Cys-48-Cys-64.

In terms of tissue distribution, produced by the crural gland and detected in venom from the spur located on each male hind leg. Is the only OvDLP that is expressed in venom gland alone.

It is found in the secreted. In terms of biological role, does not show antimicrobial, myotoxic, hemolytic and cell-promoting activities. The polypeptide is Ornithorhynchus venom defensin-like peptide A (Ornithorhynchus anatinus (Duckbill platypus)).